The following is a 120-amino-acid chain: Neuromedin-B (120 aa).

The N-terminal stretch at 1 to 29 (MSAVPLTRMLPLRFLTHLLLLSFIPLYFC) is a signal peptide. A propeptide spanning residues 30–44 (MEFSEDARNIEKIRR) is cleaved from the precursor. Met-54 bears the Methionine amide mark. Residues 58-120 (SLQDTYNPSE…MDDYIKTTQK (63 aa)) constitute a propeptide that is removed on maturation.

Belongs to the bombesin/neuromedin-B/ranatensin family. Brain, intestine, and ovaries and early embryos (stages 2 and 10).

It is found in the secreted. Functionally, stimulates smooth muscle contraction. The sequence is that of Neuromedin-B (nmb) from Xenopus laevis (African clawed frog).